A 257-amino-acid chain; its full sequence is 1-(5-phosphoribosyl)-5-[(5-phosphoribosylamino)methylideneamino] imidazole-4-carboxamide isomerase (257 aa).

The active-site Proton acceptor is the Asp8. Catalysis depends on Asp129, which acts as the Proton donor.

The protein belongs to the HisA/HisF family.

It localises to the cytoplasm. It catalyses the reaction 1-(5-phospho-beta-D-ribosyl)-5-[(5-phospho-beta-D-ribosylamino)methylideneamino]imidazole-4-carboxamide = 5-[(5-phospho-1-deoxy-D-ribulos-1-ylimino)methylamino]-1-(5-phospho-beta-D-ribosyl)imidazole-4-carboxamide. It functions in the pathway amino-acid biosynthesis; L-histidine biosynthesis; L-histidine from 5-phospho-alpha-D-ribose 1-diphosphate: step 4/9. The chain is 1-(5-phosphoribosyl)-5-[(5-phosphoribosylamino)methylideneamino] imidazole-4-carboxamide isomerase from Cyanothece sp. (strain PCC 7425 / ATCC 29141).